We begin with the raw amino-acid sequence, 20 residues long: Protease inhibitor (20 aa).

In terms of assembly, monomer. Glycosylated. As to expression, stored in epidermis and secreted into the hemolymph and cuticle. Not detected in the interior of the epidermis, fat body cells or columnar or goblet cells of the midgut epithelium (at protein level).

Functionally, inhibits trypsin and chymotrypsin. This Antheraea mylitta (Tasar silkworm) protein is Protease inhibitor.